We begin with the raw amino-acid sequence, 133 residues long: Large ribosomal subunit protein bL17 (133 aa).

Belongs to the bacterial ribosomal protein bL17 family. As to quaternary structure, part of the 50S ribosomal subunit. Contacts protein L32.

The protein is Large ribosomal subunit protein bL17 of Verminephrobacter eiseniae (strain EF01-2).